A 76-amino-acid polypeptide reads, in one-letter code: Omega-scoloptoxin(13)-Ssm2b (76 aa).

Positions M1–A22 are cleaved as a signal peptide.

It belongs to the scoloptoxin-13 family. In terms of processing, contains 3 disulfide bonds. As to expression, expressed by the venom gland.

The protein localises to the secreted. Its function is as follows. Inhibits voltage-gated calcium channel (Cav) currents. This chain is Omega-scoloptoxin(13)-Ssm2b, found in Scolopendra mutilans (Chinese red-headed centipede).